The primary structure comprises 928 residues: Retinoblastoma-associated protein (928 aa).

The interval 1–42 is disordered; it reads MPPKTPRKTAATAAAAAAEPPAPPPPPPPEEDPEQDSGPEDL. At proline 2 the chain carries N,N-dimethylproline. Residues 8-19 show a composition bias toward low complexity; sequence KTAATAAAAAAE. Residues 29-39 show a composition bias toward acidic residues; that stretch reads PEEDPEQDSGP. Serine 37 carries the post-translational modification Phosphoserine. Serine 249 is subject to Phosphoserine; by CDK1. Threonine 252 carries the phosphothreonine; by CDK1 modification. At threonine 356 the chain carries Phosphothreonine. A Phosphothreonine; by CDK1 modification is found at threonine 373. The tract at residues 373–579 is domain A; it reads TPVRTVMNTI…FDLIKQSKDR (207 aa). Residues 373 to 771 are pocket; binds T and E1A; it reads TPVRTVMNTI…QRLKTNILQY (399 aa). A Phosphoserine; by CDK2 modification is found at serine 567. Positions 580-639 are spacer; the sequence is EGPTDHLESACPLNLPLQNNHTAADMYLSPVRSPKKKGSTTRVNSTANAETQATSAFQTQ. At serine 608 the chain carries Phosphoserine. Residues 610 to 632 are disordered; that stretch reads VRSPKKKGSTTRVNSTANAETQA. Phosphoserine; by CHEK2 and CHEK1 is present on serine 612. Over residues 619-632 the composition is skewed to polar residues; the sequence is TTRVNSTANAETQA. The residue at position 624 (serine 624) is a Phosphoserine. The interval 640–771 is domain B; sequence KPLKSTSLSL…QRLKTNILQY (132 aa). The interval 763–928 is interaction with LIMD1; it reads RLKTNILQYA…SMDTSNKEEK (166 aa). Residues 771 to 928 are domain C; mediates interaction with E4F1; that stretch reads YASTRPPTLS…SMDTSNKEEK (158 aa). Residues serine 780, serine 788, and serine 795 each carry the phosphoserine modification. A Phosphoserine; by CDK1 and CDK3 modification is found at serine 807. An N6-methyllysine; by SMYD2 modification is found at lysine 810. Serine 811 is modified (phosphoserine; by CDK1 and CDK3). Threonine 821 carries the phosphothreonine; by CDK6 modification. At threonine 823 the chain carries Phosphothreonine. A Phosphothreonine; by CDK4 modification is found at threonine 826. Threonine 841 is subject to Phosphothreonine. A Phosphoserine modification is found at serine 855. Lysine 860 bears the N6-methyllysine; by SMYD2 mark. The short motif at 860-876 is the Bipartite nuclear localization signal element; sequence KRSAEGSNPPKPLKKLR. Positions 860–928 are disordered; sequence KRSAEGSNPP…SMDTSNKEEK (69 aa). Lysine 873 and lysine 874 each carry N6-acetyllysine; by PCAF. Over residues 915–928 the composition is skewed to basic and acidic residues; it reads KMNDSMDTSNKEEK.

Belongs to the retinoblastoma protein (RB) family. As to quaternary structure, the hypophosphorylated form interacts with and sequesters the E2F1 transcription factor, thereby inhibiting E2F1 transcription. Interacts with heterodimeric E2F/DP transcription factor complexes containing TFDP1 and either E2F1, E2F3, E2F4 or E2F5, or TFDP2 and E2F4. Interacts (when hyperphosphorylated and hypophosphorylated) with PKP3; the interaction inhibits RB1 interaction with and repression of the transcription factor E2F1, potentially via sequestering RB1 to the cytoplasm. The unphosphorylated form interacts with EID1, ARID3B, KDM5A, SUV39H1, MJD2A/JHDM3A and THOC1. Interacts with the N-terminal domain of TAF1. Interacts with SNW1, ATAD5, AATF, DNMT1, LIN9, LMNA, KMT5B, KMT5C, PELP1, UHRF2 and TMPO-alpha. Interacts with GRIP1 and UBR4. Interacts with ARID4A and KDM5B. Interacts with E4F1 and LIMD1. Interacts with SMARCA4/BRG1 and HDAC1. Interacts with PSMA3 and USP4. Interacts (when methylated at Lys-860) with L3MBTL1. Interacts with CHEK2; phosphorylates RB1. Interacts with CDK1 and CDK2. Interacts with PRMT2. Interacts with CEBPA. P-TEFB complex interacts with RB1; promotes phosphorylation of RB1. Interacts with RBBP9; the interaction disrupts RB1 binding to E2F1. Interacts with KAT2B/PCAF and EP300/P300. Interacts with PAX5. Interacts (phosphorylated and unphosphorylated) with BLCAP. May interact with NDC80. (Microbial infection) Interacts with adenovirus E1A protein. In terms of assembly, (Microbial infection) Interacts with HPV E7 protein. As to quaternary structure, (Microbial infection) Interacts with SV40 large T antigen. (Microbial infection) Interacts with human cytomegalovirus/HHV-5 proteins UL82 and UL123. In terms of assembly, (Microbial infection) Interacts with molluscum contagiosum virus protein MC007. Post-translationally, phosphorylated by CDK6 and CDK4, and subsequently by CDK2 at Ser-567 in G1, thereby releasing E2F1 which is then able to activate cell growth. Dephosphorylated at the late M phase. SV40 large T antigen, HPV E7 and adenovirus E1A bind to the underphosphorylated, active form of pRb. Phosphorylation at Thr-821 and Thr-826 promotes interaction between the C-terminal domain C and the Pocket domain, and thereby inhibits interactions with heterodimeric E2F/DP transcription factor complexes. Dephosphorylated at Ser-795 by calcineruin upon calcium stimulation. CDK3/cyclin-C-mediated phosphorylation at Ser-807 and Ser-811 is required for G0-G1 transition. Phosphorylated by CDK1 and CDK2 upon TGFB1-mediated apoptosis. In terms of processing, N-terminus is methylated by METTL11A/NTM1. Monomethylation at Lys-810 by SMYD2 enhances phosphorylation at Ser-807 and Ser-811, and promotes cell cycle progression. Monomethylation at Lys-860 by SMYD2 promotes interaction with L3MBTL1. Acetylated during keratinocyte differentiation. Acetylation at Lys-873 and Lys-874 regulates subcellular localization. Can be deacetylated by SIRT1. As to expression, expressed in the retina. Expressed in foreskin keratinocytes (at protein level).

The protein localises to the nucleus. It localises to the cytoplasm. Functionally, tumor suppressor that is a key regulator of the G1/S transition of the cell cycle. The hypophosphorylated form binds transcription regulators of the E2F family, preventing transcription of E2F-responsive genes. Both physically blocks E2Fs transactivating domain and recruits chromatin-modifying enzymes that actively repress transcription. Cyclin and CDK-dependent phosphorylation of RB1 induces its dissociation from E2Fs, thereby activating transcription of E2F responsive genes and triggering entry into S phase. RB1 also promotes the G0-G1 transition upon phosphorylation and activation by CDK3/cyclin-C. Directly involved in heterochromatin formation by maintaining overall chromatin structure and, in particular, that of constitutive heterochromatin by stabilizing histone methylation. Recruits and targets histone methyltransferases SUV39H1, KMT5B and KMT5C, leading to epigenetic transcriptional repression. Controls histone H4 'Lys-20' trimethylation. Inhibits the intrinsic kinase activity of TAF1. Mediates transcriptional repression by SMARCA4/BRG1 by recruiting a histone deacetylase (HDAC) complex to the c-FOS promoter. In resting neurons, transcription of the c-FOS promoter is inhibited by BRG1-dependent recruitment of a phospho-RB1-HDAC1 repressor complex. Upon calcium influx, RB1 is dephosphorylated by calcineurin, which leads to release of the repressor complex. In terms of biological role, (Microbial infection) In case of viral infections, interactions with SV40 large T antigen, HPV E7 protein or adenovirus E1A protein induce the disassembly of RB1-E2F1 complex thereby disrupting RB1's activity. The chain is Retinoblastoma-associated protein (RB1) from Homo sapiens (Human).